We begin with the raw amino-acid sequence, 147 residues long: Large ribosomal subunit protein bL9 (147 aa).

This sequence belongs to the bacterial ribosomal protein bL9 family.

In terms of biological role, binds to the 23S rRNA. This chain is Large ribosomal subunit protein bL9, found in Sulfurovum sp. (strain NBC37-1).